Consider the following 248-residue polypeptide: Phycocyanobilin:ferredoxin oxidoreductase (248 aa).

This sequence belongs to the HY2 family.

The enzyme catalyses (2R,3Z)-phycocyanobilin + 4 oxidized [2Fe-2S]-[ferredoxin] = biliverdin IXalpha + 4 reduced [2Fe-2S]-[ferredoxin] + 4 H(+). In terms of biological role, catalyzes the four-electron reduction of biliverdin IX-alpha (2-electron reduction at both the A and D rings); the reaction proceeds via an isolatable 2-electron intermediate, 181,182-dihydrobiliverdin. The polypeptide is Phycocyanobilin:ferredoxin oxidoreductase (pcyA) (Synechocystis sp. (strain ATCC 27184 / PCC 6803 / Kazusa)).